The sequence spans 63 residues: Cytochrome c oxidase subunit 5C-1 (63 aa).

Residues 15-34 (SEVKELIIGSVLGLAAGGLW) form a helical membrane-spanning segment.

It belongs to the cytochrome c oxidase subunit 5C family.

Its subcellular location is the mitochondrion inner membrane. This protein is one of the nuclear-coded polypeptide chains of cytochrome c oxidase, the terminal oxidase in mitochondrial electron transport. The polypeptide is Cytochrome c oxidase subunit 5C-1 (COX5C1) (Helianthus annuus (Common sunflower)).